We begin with the raw amino-acid sequence, 289 residues long: Complement C1q tumor necrosis factor-related protein 7 (289 aa).

The N-terminal stretch at 1–16 is a signal peptide; it reads MIVLLYVTSLAICASG. Residues 36 to 134 are disordered; the sequence is IPGLPGPPGP…GDRGDQGDPG (99 aa). A Collagen-like domain is found at 38–139; it reads GLPGPPGPPG…QGDPGLPGVC (102 aa). The span at 48–61 shows a compositional bias: low complexity; the sequence is ANGSPGPHGRIGLP. The segment covering 63-76 has biased composition (basic and acidic residues); that stretch reads RDGRDGRKGEKGEK. Low complexity predominate over residues 78-91; that stretch reads TAGLKGKTGPLGLA. Positions 93 to 102 are enriched in basic and acidic residues; it reads EKGDQGETGK. The C1q domain occupies 143–279; the sequence is SIVLKSAFSV…GFLLYVDTDY (137 aa).

The protein localises to the secreted. This Mus musculus (Mouse) protein is Complement C1q tumor necrosis factor-related protein 7 (C1qtnf7).